The chain runs to 876 residues: Serrate RNA effector molecule homolog (876 aa).

The interval Met1–Asp90 is disordered. Position 2 is an N-acetylglycine (Gly2). Ser4 bears the Phosphoserine mark. Tyr8 carries the post-translational modification Phosphotyrosine. The segment covering Tyr8–Leu73 has biased composition (basic and acidic residues). Residues Ser67, Ser74, and Ser136 each carry the phosphoserine modification. Lys150 participates in a covalent cross-link: Glycyl lysine isopeptide (Lys-Gly) (interchain with G-Cter in SUMO2). Residues Glu271–Cys412 form a disordered region. Over residues Asp297–Lys347 the composition is skewed to basic and acidic residues. The segment covering Ser370–Glu387 has biased composition (acidic residues). Residues Glu388 to Cys412 show a composition bias toward basic and acidic residues. Phosphoserine is present on residues Ser493 and Ser540. Thr544 is modified (phosphothreonine). Phosphoserine is present on Ser570. A disordered region spans residues Glu575–Asn598. Thr671 is modified (phosphothreonine). At Ser679 the chain carries Phosphoserine. Omega-N-methylarginine occurs at positions 833, 840, and 850. Residues Asn835 to Val854 are disordered.

This sequence belongs to the ARS2 family. As to quaternary structure, interacts with NCBP1 and DROSHA. Interacts with CASP8AP2 and ERBB4. Interacts with LUZP4. Interacts with NCBP2/CBP20 and NCBP3. Interacts with MTREX. In terms of tissue distribution, ubiquitously expressed.

The protein localises to the nucleus. It is found in the nucleoplasm. The protein resides in the cytoplasm. Its function is as follows. Acts as a mediator between the cap-binding complex (CBC) and the primary microRNAs (miRNAs) processing machinery during cell proliferation. Contributes to the stability and delivery of capped primary miRNA transcripts to the primary miRNA processing complex containing DGCR8 and DROSHA, thereby playing a role in RNA-mediated gene silencing (RNAi) by miRNAs. Binds capped RNAs (m7GpppG-capped RNA); however interaction is probably mediated via its interaction with NCBP1/CBP80 component of the CBC complex. Involved in cell cycle progression at S phase. Does not directly confer arsenite resistance but rather modulates arsenic sensitivity. Independently of its activity on miRNAs, necessary and sufficient to promote neural stem cell self-renewal. Does so by directly binding SOX2 promoter and positively regulating its transcription. The polypeptide is Serrate RNA effector molecule homolog (SRRT) (Homo sapiens (Human)).